The following is a 366-amino-acid chain: Histidinol-phosphate aminotransferase 1 (366 aa).

Position 226 is an N6-(pyridoxal phosphate)lysine (lysine 226).

Belongs to the class-II pyridoxal-phosphate-dependent aminotransferase family. Histidinol-phosphate aminotransferase subfamily. In terms of assembly, homodimer. Requires pyridoxal 5'-phosphate as cofactor.

The catalysed reaction is L-histidinol phosphate + 2-oxoglutarate = 3-(imidazol-4-yl)-2-oxopropyl phosphate + L-glutamate. It participates in amino-acid biosynthesis; L-histidine biosynthesis; L-histidine from 5-phospho-alpha-D-ribose 1-diphosphate: step 7/9. This Mannheimia succiniciproducens (strain KCTC 0769BP / MBEL55E) protein is Histidinol-phosphate aminotransferase 1.